Here is a 265-residue protein sequence, read N- to C-terminus: DNA repair protein RecO (265 aa).

It belongs to the RecO family.

Its function is as follows. Involved in DNA repair and RecF pathway recombination. The chain is DNA repair protein RecO from Mycobacterium marinum (strain ATCC BAA-535 / M).